Reading from the N-terminus, the 269-residue chain is Probable membrane transporter protein YfcA (269 aa).

Topologically, residues 1-7 (METFNSL) are periplasmic. Residues 8–28 (FMVSPLLLGVLFFVAMLAGFI) form a helical membrane-spanning segment. At 29–30 (DS) the chain is on the cytoplasmic side. Residues 31 to 51 (IAGGGGLLTIPALMAAGMSPA) form a helical membrane-spanning segment. Residues 52–84 (NALATNKLQACGGSISATIYFIRRKVVSLSDQK) are Periplasmic-facing. Residues 85-105 (LNIAMTFVGSMSGALLVQYVQ) form a helical membrane-spanning segment. Topologically, residues 106–111 (ADVLRQ) are cytoplasmic. A helical transmembrane segment spans residues 112–132 (ILPILVICIGLYFLLMPKLGE). Residues 133–156 (EDRQRRMYGLPFALIAGGCVGFYD) are Periplasmic-facing. A helical membrane pass occupies residues 157 to 177 (GFFGPAAGSFYALAFVTLCGF). Residues 178–197 (NLAKATAHAKLLNATSNIGG) lie on the Cytoplasmic side of the membrane. A helical transmembrane segment spans residues 198–218 (LLLFILGGKVIWATGFVMLVG). The Periplasmic segment spans residues 219–269 (QFLGARMGSRLVLSKGQKLIRPMIVIVSAVMSAKLLYDSHGQEILHWLGMN).

This sequence belongs to the 4-toluene sulfonate uptake permease (TSUP) (TC 2.A.102) family.

Its subcellular location is the cell inner membrane. The protein is Probable membrane transporter protein YfcA (yfcA) of Escherichia coli O157:H7.